Consider the following 366-residue polypeptide: Prostaglandin F2-alpha receptor (366 aa).

At 1–31 (MSMNSSKQPVSPAAGLIANTTCQTENRLSVF) the chain is on the extracellular side. 2 N-linked (GlcNAc...) asparagine glycosylation sites follow: N4 and N19. The chain crosses the membrane as a helical span at residues 32–55 (FSIIFMTVGILSNSLAIAILMKAY). Residues 56 to 69 (QRFRQKSKASFLLL) lie on the Cytoplasmic side of the membrane. The helical transmembrane segment at 70–90 (ASGLVITDFFGHLINGGIAVF) threads the bilayer. Over 91 to 109 (VYASDKDWIRFDQSNILCS) the chain is Extracellular. C108 and C186 are disulfide-bonded. A helical membrane pass occupies residues 110 to 131 (IFGISMVFSGLCPLFLGSAMAI). The Cytoplasmic portion of the chain corresponds to 132 to 152 (ERCIGVTNPIFHSTKITSKHV). Residues 153-175 (KMILSGVCMFAVFVAVLPILGHR) form a helical membrane-spanning segment. The Extracellular segment spans residues 176–198 (DYQIQASRTWCFYNTEHIEDWED). A helical membrane pass occupies residues 199 to 224 (RFYLLFFSFLGLLALGVSFSCNAVTG). The Cytoplasmic portion of the chain corresponds to 225–250 (VTLLRVKFRSQQHRQGRSHHLEMIIQ). Residues 251 to 267 (LLAIMCVSCVCWSPFLV) traverse the membrane as a helical segment. The Extracellular portion of the chain corresponds to 268 to 285 (TMANIAINGNNSPVTCET). The helical transmembrane segment at 286–307 (TLFALRMATWNQILDPWVYILL) threads the bilayer. Over 308-366 (RKAVLRNLYKLASRCCGVNIISLHIWELSSIKNSLKVAAISESPAAEKESQQASSEAGL) the chain is Cytoplasmic.

Belongs to the G-protein coupled receptor 1 family.

It localises to the cell membrane. In terms of biological role, receptor for prostaglandin F2-alpha (PGF2-alpha). The activity of this receptor is mediated by G proteins which activate a phosphatidylinositol-calcium second messenger system. Initiates luteolysis in the corpus luteum. In Mus musculus (Mouse), this protein is Prostaglandin F2-alpha receptor (Ptgfr).